The primary structure comprises 334 residues: Protein OPG181 (334 aa).

Belongs to the orthopoxvirus OPG181 family.

This is Protein OPG181 (OPG181) from Bos taurus (Bovine).